Here is a 301-residue protein sequence, read N- to C-terminus: RNA polymerase II holoenzyme cyclin-like subunit (301 aa).

The region spanning 53–142 (QQLIKLGKRT…LGECEFALIS (90 aa)) is the Cyclin N-terminal domain.

The protein belongs to the cyclin family. Cyclin C subfamily. Component of the srb8-11 complex, a regulatory module of the Mediator complex.

It is found in the nucleus. Its function is as follows. Component of the srb8-11 complex. The srb8-11 complex is a regulatory module of the Mediator complex which is itself involved in regulation of basal and activated RNA polymerase II-dependent transcription. The srb8-11 complex may be involved in the transcriptional repression of a subset of genes regulated by Mediator. It may inhibit the association of the Mediator complex with RNA polymerase II to form the holoenzyme complex. The srb8-11 complex phosphorylates the C-terminal domain (CTD) of the largest subunit of RNA polymerase II. In Aspergillus terreus (strain NIH 2624 / FGSC A1156), this protein is RNA polymerase II holoenzyme cyclin-like subunit (ssn8).